Consider the following 89-residue polypeptide: Small ribosomal subunit protein bS20 (89 aa).

Belongs to the bacterial ribosomal protein bS20 family.

Binds directly to 16S ribosomal RNA. The chain is Small ribosomal subunit protein bS20 from Phenylobacterium zucineum (strain HLK1).